We begin with the raw amino-acid sequence, 312 residues long: Small ribosomal subunit biogenesis GTPase RsgA (312 aa).

Residues Gln-86–Pro-245 form the CP-type G domain. GTP is bound by residues Thr-135–Asp-138 and Gly-187–Ser-195. Positions 270, 275, 277, and 283 each coordinate Zn(2+).

This sequence belongs to the TRAFAC class YlqF/YawG GTPase family. RsgA subfamily. In terms of assembly, monomer. Associates with 30S ribosomal subunit, binds 16S rRNA. It depends on Zn(2+) as a cofactor.

It is found in the cytoplasm. In terms of biological role, one of several proteins that assist in the late maturation steps of the functional core of the 30S ribosomal subunit. Helps release RbfA from mature subunits. May play a role in the assembly of ribosomal proteins into the subunit. Circularly permuted GTPase that catalyzes slow GTP hydrolysis, GTPase activity is stimulated by the 30S ribosomal subunit. This Prochlorococcus marinus (strain NATL1A) protein is Small ribosomal subunit biogenesis GTPase RsgA.